We begin with the raw amino-acid sequence, 247 residues long: Carboxy-S-adenosyl-L-methionine synthase (247 aa).

Residues Tyr40, 65–67, 90–91, 122–123, Asn137, and Arg204 contribute to the S-adenosyl-L-methionine site; these read GAS, DN, and DI.

It belongs to the class I-like SAM-binding methyltransferase superfamily. Cx-SAM synthase family. In terms of assembly, homodimer.

The catalysed reaction is prephenate + S-adenosyl-L-methionine = carboxy-S-adenosyl-L-methionine + 3-phenylpyruvate + H2O. Functionally, catalyzes the conversion of S-adenosyl-L-methionine (SAM) to carboxy-S-adenosyl-L-methionine (Cx-SAM). The chain is Carboxy-S-adenosyl-L-methionine synthase from Pseudomonas entomophila (strain L48).